Reading from the N-terminus, the 173-residue chain is Large ribosomal subunit protein bL9 (173 aa).

Residues 151 to 173 are disordered; the sequence is YDDTPDRTETEESTKELQEEHAE.

It belongs to the bacterial ribosomal protein bL9 family.

Functionally, binds to the 23S rRNA. This chain is Large ribosomal subunit protein bL9, found in Lawsonia intracellularis (strain PHE/MN1-00).